A 239-amino-acid polypeptide reads, in one-letter code: Large ribosomal subunit protein uL30 (239 aa).

The disordered stretch occupies residues 1 to 37 (MSKFVPENVQKKLARDEKLRKAKAEQRKASSAQMKQR). Residues 9–28 (VQKKLARDEKLRKAKAEQRK) show a composition bias toward basic and acidic residues.

This sequence belongs to the universal ribosomal protein uL30 family.

This chain is Large ribosomal subunit protein uL30 (RPL7), found in Tetrahymena thermophila.